A 509-amino-acid polypeptide reads, in one-letter code: MQFLWLCLLSAVTLQFTGTLAFYPIKLPDFTKGIISHHGSVGRRFFTFPGLYKHAHTGSTTLNIRRGPSNYRRDNNYPAQIASPPTAPNTLGINNDGYDFSYFSEVKVGSEGQKMWMLIDTGASGTWVFGSDCTSKACGRHNTFGKEDSKTIKVTDEKWGVTYGTGKVSGVIVNDTMSFAGFELVTPFGSASTASDDFLNYPMDGILGIGPQDPNAKTPTVVQLLMQQKLLKSNVIGINLQRASEGATDGQITFGDIDKSKFSGELIYSNVVPNGYQWEIAMDDLIMDGKSLNLKGRTGIIDTGTSFLILPPADADLIHSMIPQADKGSGFYTLPCSTKVDIKLSIGGVEYTIQPDDYVGNETATKGTCNSLIVGRQILGPKQWLVGDVFLKNVYSVFDFDKNRVGLAARKYAGTKNPPSSTPSPGMFLLHAIHCQKTISVLMLHIDPTSNKAPSGGSPGLPAESGSDSTTNGEATNGATSSPNSSSSVLTPTWLTLAVFFAIGSSLWS.

A signal peptide spans 1–21 (MQFLWLCLLSAVTLQFTGTLA). One can recognise a Peptidase A1 domain in the interval 102 to 408 (YFSEVKVGSE…DFDKNRVGLA (307 aa)). The active site involves Asp120. Asn174 carries an N-linked (GlcNAc...) asparagine glycan. Residue Asp302 is part of the active site. An N-linked (GlcNAc...) asparagine glycan is attached at Asn361. A disordered region spans residues 451–489 (NKAPSGGSPGLPAESGSDSTTNGEATNGATSSPNSSSSV). Residues 466 to 480 (GSDSTTNGEATNGAT) show a composition bias toward polar residues. Asn484 carries an N-linked (GlcNAc...) asparagine glycan. A lipid anchor (GPI-anchor amidated serine) is attached at Ser485. Residues 486-509 (SSSVLTPTWLTLAVFFAIGSSLWS) constitute a propeptide, removed in mature form.

This sequence belongs to the peptidase A1 family.

The protein localises to the cell membrane. Functionally, probable GPI-anchored aspartic-type endopeptidase which contributes to virulence. In Arthroderma benhamiae (strain ATCC MYA-4681 / CBS 112371) (Trichophyton mentagrophytes), this protein is Probable aspartic-type endopeptidase CTSD (CTSD).